The chain runs to 344 residues: Holliday junction branch migration complex subunit RuvB (344 aa).

The tract at residues 1–182 (MRIEALNTAP…FGINSRLDYY (182 aa)) is large ATPase domain (RuvB-L). ATP is bound by residues Ile21, Arg22, Gly63, Lys66, Thr67, Thr68, 129–131 (EDY), Arg172, Tyr182, and Arg219. Thr67 contacts Mg(2+). The tract at residues 183-253 (NPELLQSIII…VARRTLESLE (71 aa)) is small ATPAse domain (RuvB-S). Residues 256–344 (EGGLDDMDKK…GSLFDTAEDG (89 aa)) are head domain (RuvB-H). Residues Arg311 and Arg316 each coordinate DNA.

Belongs to the RuvB family. In terms of assembly, homohexamer. Forms an RuvA(8)-RuvB(12)-Holliday junction (HJ) complex. HJ DNA is sandwiched between 2 RuvA tetramers; dsDNA enters through RuvA and exits via RuvB. An RuvB hexamer assembles on each DNA strand where it exits the tetramer. Each RuvB hexamer is contacted by two RuvA subunits (via domain III) on 2 adjacent RuvB subunits; this complex drives branch migration. In the full resolvosome a probable DNA-RuvA(4)-RuvB(12)-RuvC(2) complex forms which resolves the HJ.

Its subcellular location is the cytoplasm. It carries out the reaction ATP + H2O = ADP + phosphate + H(+). Functionally, the RuvA-RuvB-RuvC complex processes Holliday junction (HJ) DNA during genetic recombination and DNA repair, while the RuvA-RuvB complex plays an important role in the rescue of blocked DNA replication forks via replication fork reversal (RFR). RuvA specifically binds to HJ cruciform DNA, conferring on it an open structure. The RuvB hexamer acts as an ATP-dependent pump, pulling dsDNA into and through the RuvAB complex. RuvB forms 2 homohexamers on either side of HJ DNA bound by 1 or 2 RuvA tetramers; 4 subunits per hexamer contact DNA at a time. Coordinated motions by a converter formed by DNA-disengaged RuvB subunits stimulates ATP hydrolysis and nucleotide exchange. Immobilization of the converter enables RuvB to convert the ATP-contained energy into a lever motion, pulling 2 nucleotides of DNA out of the RuvA tetramer per ATP hydrolyzed, thus driving DNA branch migration. The RuvB motors rotate together with the DNA substrate, which together with the progressing nucleotide cycle form the mechanistic basis for DNA recombination by continuous HJ branch migration. Branch migration allows RuvC to scan DNA until it finds its consensus sequence, where it cleaves and resolves cruciform DNA. The chain is Holliday junction branch migration complex subunit RuvB from Chlorobaculum tepidum (strain ATCC 49652 / DSM 12025 / NBRC 103806 / TLS) (Chlorobium tepidum).